We begin with the raw amino-acid sequence, 216 residues long: Acyl-homoserine-lactone synthase (216 aa).

This sequence belongs to the autoinducer synthase family.

It carries out the reaction a fatty acyl-[ACP] + S-adenosyl-L-methionine = an N-acyl-L-homoserine lactone + S-methyl-5'-thioadenosine + holo-[ACP] + H(+). In terms of biological role, required for the synthesis of OHHL (N-(3-oxohexanoyl)-L-homoserine lactone), an autoinducer molecule which binds to a yet uncharacterized transcriptional regulator. The chain is Acyl-homoserine-lactone synthase (eagI) from Enterobacter agglomerans (Erwinia herbicola).